The chain runs to 453 residues: Pup--protein ligase (453 aa).

Residue E9 participates in Mg(2+) binding. R53 serves as a coordination point for ATP. Y55 is a binding site for Mg(2+). The Proton acceptor role is filled by D57. Residue E63 coordinates Mg(2+). ATP contacts are provided by T66 and W420.

This sequence belongs to the Pup ligase/Pup deamidase family. Pup-conjugating enzyme subfamily.

The catalysed reaction is ATP + [prokaryotic ubiquitin-like protein]-L-glutamate + [protein]-L-lysine = ADP + phosphate + N(6)-([prokaryotic ubiquitin-like protein]-gamma-L-glutamyl)-[protein]-L-lysine.. The protein operates within protein degradation; proteasomal Pup-dependent pathway. Its pathway is protein modification; protein pupylation. In terms of biological role, catalyzes the covalent attachment of the prokaryotic ubiquitin-like protein modifier Pup to the proteasomal substrate proteins, thereby targeting them for proteasomal degradation. This tagging system is termed pupylation. The ligation reaction involves the side-chain carboxylate of the C-terminal glutamate of Pup and the side-chain amino group of a substrate lysine. This chain is Pup--protein ligase, found in Streptomyces griseus subsp. griseus (strain JCM 4626 / CBS 651.72 / NBRC 13350 / KCC S-0626 / ISP 5235).